Consider the following 116-residue polypeptide: Ribosome-binding factor A (116 aa).

Belongs to the RbfA family. As to quaternary structure, monomer. Binds 30S ribosomal subunits, but not 50S ribosomal subunits or 70S ribosomes.

The protein resides in the cytoplasm. Functionally, one of several proteins that assist in the late maturation steps of the functional core of the 30S ribosomal subunit. Associates with free 30S ribosomal subunits (but not with 30S subunits that are part of 70S ribosomes or polysomes). Required for efficient processing of 16S rRNA. May interact with the 5'-terminal helix region of 16S rRNA. The polypeptide is Ribosome-binding factor A (Streptococcus mutans serotype c (strain ATCC 700610 / UA159)).